A 481-amino-acid polypeptide reads, in one-letter code: Probable zeta-carotene desaturase (481 aa).

The protein belongs to the zeta carotene desaturase family. The cofactor is decylplastoquinone. 6-decylubiquinone serves as cofactor.

It catalyses the reaction 9,9'-di-cis-zeta-carotene + 2 a quinone = 7,7',9,9'-tetra-cis-lycopene + 2 a quinol. It participates in carotenoid biosynthesis; lycopene biosynthesis. In terms of biological role, catalyzes the conversion of zeta-carotene to lycopene via the intermediary of neurosporene. It carries out two consecutive desaturations (introduction of double bonds) at positions C-7 and C-7'. This chain is Probable zeta-carotene desaturase (zds), found in Synechococcus elongatus (strain ATCC 33912 / PCC 7942 / FACHB-805) (Anacystis nidulans R2).